The chain runs to 1278 residues: MAQSKRHVYSRTPSGSRMSAEASARPLRVGSRVEVIGKGHRGTVAYVGATLFATGKWVGVILDEAKGKNDGTVQGRKYFTCDEGHGIFVRQSQIQVFEDGADTTSPETPDSSASKVLKREGTDTTAKTSKLRGLKPKKAPTARKTTTRRPKPTRPASTGVAGASSSLGPSGSASAGELSSSEPSTPAQTPLAAPIIPTPVLTSPGAVPPLPSPSKEEEGLRAQVRDLEEKLETLRLKRAEDKAKLKELEKHKIQLEQVQEWKSKMQEQQADLQRRLKEARKEAKEALEAKERYMEEMADTADAIEMATLDKEMAEERAESLQQEVEALKERVDELTTDLEILKAEIEEKGSDGAASSYQLKQLEEQNARLKDALVRMRDLSSSEKQEHVKLQKLMEKKNQELEVVRQQRERLQEELSQAESTIDELKEQVDAALGAEEMVEMLTDRNLNLEEKVRELRETVGDLEAMNEMNDELQENARETELELREQLDMAGARVREAQKRVEAAQETVADYQQTIKKYRQLTAHLQDVNRELTNQQEASVERQQQPPPETFDFKIKFAETKAHAKAIEMELRQMEVAQANRHMSLLTAFMPDSFLRPGGDHDCVLVLLLMPRLICKAELIRKQAQEKFELSENCSERPGLRGAAGEQLSFAAGLVYSLSLLQATLHRYEHALSQCSVDVYKKVGSLYPEMSAHERSLDFLIELLHKDQLDETVNVEPLTKAIKYYQHLYSIHLAEQPEDCTMQLADHIKFTQSALDCMSVEVGRLRAFLQGGQEATDIALLLRDLETSCSDIRQFCKKIRRRMPGTDAPGIPAALAFGPQVSDTLLDCRKHLTWVVAVLQEVAAAAAQLIAPLAENEGLLVAALEELAFKASEQIYGTPSSSPYECLRQSCNILISTMNKLATAMQEGEYDAERPPSKPPPVELRAAALRAEITDAEGLGLKLEDRETVIKELKKSLKIKGEELSEANVRLSLLEKKLDSAAKDADERIEKVQTRLEETQALLRKKEKEFEETMDALQADIDQLEAEKAELKQRLNSQSKRTIEGLRGPPPSGIATLVSGIAGEEQQRGAIPGQAPGSVPGPGLVKDSPLLLQQISAMRLHISQLQHENSILKGAQMKASLASLPPLHVAKLSHEGPGSELPAGALYRKTSQLLETLNQLSTHTHVVDITRTSPAAKSPSAQLMEQVAQLKSLSDTVEKLKDEVLKETVSQRPGATVPTDFATFPSSAFLRAKEEQQDDTVYMGKVTFSCAAGFGQRHRLVLTQEQLHQLHSRLIS.

The disordered stretch occupies residues 1-25; it reads MAQSKRHVYSRTPSGSRMSAEASAR. Positions 48-90 constitute a CAP-Gly domain; that stretch reads GATLFATGKWVGVILDEAKGKNDGTVQGRKYFTCDEGHGIFVR. Residues 100-223 form a disordered region; the sequence is GADTTSPETP…SKEEEGLRAQ (124 aa). Polar residues predominate over residues 102 to 114; the sequence is DTTSPETPDSSAS. Position 108 is a phosphothreonine (Thr-108). The segment covering 129–152 has biased composition (basic residues); the sequence is SKLRGLKPKKAPTARKTTTRRPKP. Thr-145, Thr-146, and Thr-147 each carry phosphothreonine; by SLK. Over residues 161 to 184 the composition is skewed to low complexity; it reads AGASSSLGPSGSASAGELSSSEPS. Ser-179 is modified (phosphoserine; by PLK1). Ser-212 bears the Phosphoserine; by CDK1 mark. Coiled-coil stretches lie at residues 213–547, 943–1049, and 1182–1211; these read PSKE…RQQQ, LKLE…EGLR, and SAQLMEQVAQLKSLSDTVEKLKDEVLKETV. The span at 214–223 shows a compositional bias: basic and acidic residues; the sequence is SKEEEGLRAQ. The tract at residues 911–1278 is interaction with HPS6; the sequence is EYDAERPPSK…LHQLHSRLIS (368 aa).

This sequence belongs to the dynactin 150 kDa subunit family. As to quaternary structure, monomer and homodimer. Subunit of dynactin, a multiprotein complex part of a tripartite complex with dynein and a adapter, such as BICDL1, BICD2 or HOOK3. The dynactin complex is built around ACTR1A/ACTB filament and consists of an actin-related filament composed of a shoulder domain, a pointed end and a barbed end. Its length is defined by its flexible shoulder domain. The soulder is composed of 2 DCTN1 subunits, 4 DCTN2 and 2 DCTN3. DCTN1/p150(glued) binds directly to microtubules and to cytoplasmic dynein. The 4 DCNT2 (via N-terminus) bind the ACTR1A filament and act as molecular rulers to determine the length. The pointed end is important for binding dynein-dynactin cargo adapters. Consists of 4 subunits: ACTR10, DCNT4, DCTN5 and DCTN6. The barbed end is composed of a CAPZA1:CAPZB heterodimers, which binds ACTR1A/ACTB filament and dynactin and stabilizes dynactin. Interacts with the C-terminus of MAPRE1, MAPRE2 and MAPRE3. Interacts (via C-terminus) with SNX6. Interacts with CLN3, DYNAP, ECPAS and FBXL5. Interacts with MISP; this interaction regulates its distribution at the cell cortex. Interacts with CEP131. Interacts with CEP126. Interacts with CLIP1. Interacts with dynein intermediate chain and dynein heavy chain. Interacts with PLK1 (via POLO-box domain). Interacts with TBCB. Binds preferentially to tyrosinated microtubules than to detyrosinated microtubules. Interacts with PARD6A. Interacts with HPS6. Interacts with KIF3A. Interacts with BICD2. Interacts with DST (isoform 9). Interacts with DST (isoform 1). Identified in a complex with MREG and RILP. Interacts with BCCIP (isoform 2/alpha). Interacts with DCDC1. Interacts with AKNA. Interacts with DYNC1I2. Interacts with RUFY3 and RUFY4. Post-translationally, ubiquitinated by a SCF complex containing FBXL5, leading to its degradation by the proteasome. Phosphorylation by SLK at Thr-145, Thr-146 and Thr-147 targets DCTN1 to the centrosome. It is uncertain if SLK phosphorylates all three threonines or one or two of them. PLK1-mediated phosphorylation at Ser-179 is essential for its localization in the nuclear envelope, promotes its dissociation from microtubules during early mitosis and positively regulates nuclear envelope breakdown during prophase. Brain.

Its subcellular location is the cytoplasm. It localises to the cytoskeleton. The protein localises to the microtubule organizing center. The protein resides in the centrosome. It is found in the centriole. Its subcellular location is the spindle. It localises to the nucleus envelope. The protein localises to the cell cortex. Functionally, part of the dynactin complex that activates the molecular motor dynein for ultra-processive transport along microtubules. Plays a key role in dynein-mediated retrograde transport of vesicles and organelles along microtubules by recruiting and tethering dynein to microtubules. Binds to both dynein and microtubules providing a link between specific cargos, microtubules and dynein. Essential for targeting dynein to microtubule plus ends, recruiting dynein to membranous cargos and enhancing dynein processivity (the ability to move along a microtubule for a long distance without falling off the track). Can also act as a brake to slow the dynein motor during motility along the microtubule. Can regulate microtubule stability by promoting microtubule formation, nucleation and polymerization and by inhibiting microtubule catastrophe in neurons. Inhibits microtubule catastrophe by binding both to microtubules and to tubulin, leading to enhanced microtubule stability along the axon. Plays a role in metaphase spindle orientation. Plays a role in centriole cohesion and subdistal appendage organization and function. Its recruitment to the centriole in a KIF3A-dependent manner is essential for the maintenance of centriole cohesion and the formation of subdistal appendage. Also required for microtubule anchoring at the mother centriole. Plays a role in primary cilia formation. The chain is Dynactin subunit 1 from Homo sapiens (Human).